The sequence spans 327 residues: DNA-directed RNA polymerase subunit alpha (327 aa).

Positions 1–233 (MQNVLKSFLT…HQLAAFVDLK (233 aa)) are alpha N-terminal domain (alpha-NTD). An alpha C-terminal domain (alpha-CTD) region spans residues 247-327 (VNPLLLRPVE…GWPPADLTDQ (81 aa)).

Belongs to the RNA polymerase alpha chain family. In terms of assembly, homodimer. The RNAP catalytic core consists of 2 alpha, 1 beta, 1 beta' and 1 omega subunit. When a sigma factor is associated with the core the holoenzyme is formed, which can initiate transcription.

It carries out the reaction RNA(n) + a ribonucleoside 5'-triphosphate = RNA(n+1) + diphosphate. DNA-dependent RNA polymerase catalyzes the transcription of DNA into RNA using the four ribonucleoside triphosphates as substrates. The polypeptide is DNA-directed RNA polymerase subunit alpha (Coxiella burnetii (strain CbuK_Q154) (Coxiella burnetii (strain Q154))).